The primary structure comprises 102 residues: PqqA binding protein (102 aa).

The protein belongs to the PqqD family. As to quaternary structure, monomer. Interacts with PqqE.

It functions in the pathway cofactor biosynthesis; pyrroloquinoline quinone biosynthesis. Functionally, functions as a PqqA binding protein and presents PqqA to PqqE, in the pyrroloquinoline quinone (PQQ) biosynthetic pathway. This is PqqA binding protein from Rhodopseudomonas palustris (strain ATCC BAA-98 / CGA009).